The sequence spans 104 residues: Enhancer of rudimentary homolog 1 (104 aa).

It belongs to the E(R) family. In terms of assembly, homodimer. Component of the erh1-mmi1 complex. Interacts with mmi1 (via N-terminus) in a 2:2 stoichiometry.

Its subcellular location is the nucleus. It localises to the cytoplasm. Functionally, forms part of the erh1-mmi1 complex that recruits the CCR4-NOT complex and the NURS complex to target RNAs. Suppresses the meiotic program during vegetative growth and promotes the meiotic program during mating. Recruitment of the NURS complex to target mRNAs promotes mRNA decay by engagement of the nuclear exosome, and formation of heterochromatin islands at meiotic genes silenced by the exosome. Recruitment of the CCR4-NOT complex to target RNAs promotes heterochromatin formation at RNAi-dependent heterochromatin domains (HOODs), including a subset of meiotic genes, lncRNAs and retrotransposons. Recruitment of the CCR4-NOT complex to rDNA promotes rDNA heterochromatin assembly. This chain is Enhancer of rudimentary homolog 1, found in Schizosaccharomyces pombe (strain 972 / ATCC 24843) (Fission yeast).